A 3926-amino-acid polypeptide reads, in one-letter code: Hybrid PKS-NRPS synthetase LUC5 (3926 aa).

One can recognise a Ketosynthase family 3 (KS3) domain in the interval 8-439 (REPIAIVGTA…GTNAHAIIES (432 aa)). Active-site for beta-ketoacyl synthase activity residues include Cys181, His318, and His359. Positions 545–863 (VFTGQGAQWP…QGALTRNVHD (319 aa)) are malonyl-CoA:ACP transacylase (MAT) domain. Residues 932 to 1065 (HPLLGTRSTE…GHLRVDFGSE (134 aa)) form an N-terminal hotdog fold region. The interval 932–1225 (HPLLGTRSTE…GLTCTSLLRP (294 aa)) is dehydratase (DH) domain. Residues 932–1228 (HPLLGTRSTE…CTSLLRPGPS (297 aa)) enclose the PKS/mFAS DH domain. The Proton acceptor; for dehydratase activity role is filled by His964. The interval 1081–1228 (LTSVNIERFY…CTSLLRPGPS (148 aa)) is C-terminal hotdog fold. Asp1138 functions as the Proton donor; for dehydratase activity in the catalytic mechanism. Positions 1344 to 1572 (IRAVGENLTE…VNDFYDPSKY (229 aa)) are C-methyltransferase (CMeT) domain. The interval 2091-2265 (TYLLAGCTGG…AASVIHIGMI (175 aa)) is ketoreductase (KR) domain 1. Residues 2371–2448 (EMLEVVEEEF…EICSTAVASL (78 aa)) enclose the Carrier 1 domain. Ser2408 is modified (O-(pantetheine 4'-phosphoryl)serine). Over residues 2474-2506 (VSGNGSSSSRAPTEFNSSTLKSGAQSTQGTSVS) the composition is skewed to polar residues. The tract at residues 2474–2518 (VSGNGSSSSRAPTEFNSSTLKSGAQSTQGTSVSGDKDTNSVDGSA) is disordered. A compositionally biased stretch (basic and acidic residues) spans 2507-2518 (GDKDTNSVDGSA). Residues 2525-2810 (PLSFAQERIW…VNLLPLRFQL (286 aa)) are condensation. Residues 2979–3389 (DWVKRQPDAI…RIAGDSQIKL (411 aa)) form an adenylation region. A Carrier 2 domain is found at 3501–3580 (ETLTTTQERL…GMAAKIDGST (80 aa)). An O-(pantetheine 4'-phosphoryl)serine modification is found at Ser3540. Positions 3619–3840 (LTGATGFLGL…DFVPVEQVAD (222 aa)) are thiolester reductase (TE) domain.

It in the C-terminal section; belongs to the NRP synthetase family.

It participates in mycotoxin biosynthesis. In terms of biological role, hybrid PKS-NRPS synthetase; part of the gene cluster that mediates the biosynthesis of the mycotoxin lucilactaene and the lucilactaene-related compound NG-391 that act as cell cycle inhibitors with potent growth inhibitory activity against malarial parasites, moderate growth inhibitory activity against cancer cells, and no activity against bacteria and fungi. The hybrid PKS-NRPS synthetase LUC5 is responsible for the condensation of one acetyl-coenzyme A (CoA) unit with six malonyl-CoA units and the amide linkage of the arising heptaketide and homoserine, subsequently releasing the first intermediate prelucilactaene B, as an alcohol with an open ring structure. Lucilactaene and NG-391 lack the 7-methyl group present in fusarins which is inserted in fusarins by the C-methyltransferase (CMeT) domain of the fusarin synthetase FUS1, suggesting that the CMet domain of LUC5 does not methylate this position. Within the pathway, both the cytochrome P450 monooxygenase LUC2 and the hydrolase LUC6 function in parallel in modification of prelucilactaene B. LUC6 may catalyze the 2-pyrrolidone ring formation to form prelucilactaene C from prelucilactaene B, followed by C-15 hydroxylation by the same enzyme to give prelucilactaene D, which is then converted to prelucilactaene E by epoxidation, and finally to prelucilactaene F by cyclization. Prelucilactane D, prelucilactaene E, and prelucilactaene F can be converted to dihydrolucilactaene, NG391, and lucilactaene, respectively, via C-20 methyl group hydroxylation by the cytochrome P450 monooxygenase LUC2. However, LUC2, unlike FUS8 in fusarin C biosynthesis, is not enough for the full oxidation of the C-20 methyl group into carboxylic acid, which is a prerequisite for the final methylation step. The aldehyde dehydrogenase LUC3 is involved in the biosynthesis by further oxidation of the C-20 alcoholic analog prelucilactaene G into a carboxylic derivative. This unidentified carboxylic derivative may be converted to demethyllucilactaene. As the last step, the methyltransferase LUC1 methylates the hydroxyl group at C-21 of demethyllucilactaene to generate lucilactaene. The chain is Hybrid PKS-NRPS synthetase LUC5 from Fusarium sp.